The sequence spans 800 residues: DNA topoisomerase 4 subunit A (800 aa).

Positions 31–495 (LPDVRDGLKP…EIEEIKIDKE (465 aa)) constitute a Topo IIA-type catalytic domain. Tyr-119 acts as the O-(5'-phospho-DNA)-tyrosine intermediate in catalysis.

This sequence belongs to the type II topoisomerase GyrA/ParC subunit family. ParC type 2 subfamily. As to quaternary structure, heterotetramer composed of ParC and ParE.

It localises to the cell membrane. The enzyme catalyses ATP-dependent breakage, passage and rejoining of double-stranded DNA.. In terms of biological role, topoisomerase IV is essential for chromosome segregation. It relaxes supercoiled DNA. Performs the decatenation events required during the replication of a circular DNA molecule. The chain is DNA topoisomerase 4 subunit A from Staphylococcus aureus (strain MRSA252).